The chain runs to 447 residues: Tubulin beta-5 chain (447 aa).

GTP is bound by residues glutamine 11, glutamate 69, serine 138, glycine 142, threonine 143, glycine 144, asparagine 204, and asparagine 226. Residue glutamate 69 participates in Mg(2+) binding. A disordered region spans residues 421–447 (EYQQYQDATADDEEEDYGDEEEDEVAA). Over residues 429–447 (TADDEEEDYGDEEEDEVAA) the composition is skewed to acidic residues.

The protein belongs to the tubulin family. Dimer of alpha and beta chains. A typical microtubule is a hollow water-filled tube with an outer diameter of 25 nm and an inner diameter of 15 nM. Alpha-beta heterodimers associate head-to-tail to form protofilaments running lengthwise along the microtubule wall with the beta-tubulin subunit facing the microtubule plus end conferring a structural polarity. Microtubules usually have 13 protofilaments but different protofilament numbers can be found in some organisms and specialized cells. Mg(2+) is required as a cofactor. As to expression, expressed in roots, leaf sheaths, and suspension cultured cells.

The protein localises to the cytoplasm. Its subcellular location is the cytoskeleton. Tubulin is the major constituent of microtubules, a cylinder consisting of laterally associated linear protofilaments composed of alpha- and beta-tubulin heterodimers. Microtubules grow by the addition of GTP-tubulin dimers to the microtubule end, where a stabilizing cap forms. Below the cap, tubulin dimers are in GDP-bound state, owing to GTPase activity of alpha-tubulin. In Oryza sativa subsp. japonica (Rice), this protein is Tubulin beta-5 chain (TUBB5).